The sequence spans 428 residues: Enolase (428 aa).

(2R)-2-phosphoglycerate is bound at residue glutamine 163. The active-site Proton donor is glutamate 205. 3 residues coordinate Mg(2+): aspartate 242, glutamate 283, and aspartate 310. The (2R)-2-phosphoglycerate site is built by lysine 335, arginine 364, serine 365, and lysine 386. The active-site Proton acceptor is the lysine 335.

Belongs to the enolase family. The cofactor is Mg(2+).

The protein resides in the cytoplasm. Its subcellular location is the secreted. The protein localises to the cell surface. It catalyses the reaction (2R)-2-phosphoglycerate = phosphoenolpyruvate + H2O. It functions in the pathway carbohydrate degradation; glycolysis; pyruvate from D-glyceraldehyde 3-phosphate: step 4/5. Functionally, catalyzes the reversible conversion of 2-phosphoglycerate (2-PG) into phosphoenolpyruvate (PEP). It is essential for the degradation of carbohydrates via glycolysis. The protein is Enolase of Sulfurihydrogenibium sp. (strain YO3AOP1).